Here is a 38-residue protein sequence, read N- to C-terminus: Photosystem II reaction center protein M (38 aa).

A helical membrane pass occupies residues 7–27 (GFVASILFVLVPTVFLLILYI).

It belongs to the PsbM family. As to quaternary structure, PSII is composed of 1 copy each of membrane proteins PsbA, PsbB, PsbC, PsbD, PsbE, PsbF, PsbH, PsbI, PsbJ, PsbK, PsbL, PsbM, PsbT, PsbX, PsbY, PsbZ, Psb30/Ycf12, peripheral proteins PsbO, CyanoQ (PsbQ), PsbU, PsbV and a large number of cofactors. It forms dimeric complexes.

The protein localises to the cellular thylakoid membrane. Its function is as follows. One of the components of the core complex of photosystem II (PSII). PSII is a light-driven water:plastoquinone oxidoreductase that uses light energy to abstract electrons from H(2)O, generating O(2) and a proton gradient subsequently used for ATP formation. It consists of a core antenna complex that captures photons, and an electron transfer chain that converts photonic excitation into a charge separation. This subunit is found at the monomer-monomer interface. The protein is Photosystem II reaction center protein M of Nostoc punctiforme (strain ATCC 29133 / PCC 73102).